The sequence spans 227 residues: Large ribosomal subunit protein uL3 (227 aa).

Gln151 bears the N5-methylglutamine mark.

The protein belongs to the universal ribosomal protein uL3 family. In terms of assembly, part of the 50S ribosomal subunit. Forms a cluster with proteins L14 and L19. Methylated by PrmB.

Functionally, one of the primary rRNA binding proteins, it binds directly near the 3'-end of the 23S rRNA, where it nucleates assembly of the 50S subunit. The chain is Large ribosomal subunit protein uL3 from Gluconobacter oxydans (strain 621H) (Gluconobacter suboxydans).